We begin with the raw amino-acid sequence, 398 residues long: MVDLVKRFLQLEAASGIILFFTAVLALILANSPWSEIYFSFLDIPVQFRVGSLDVHKPLLLWINDGLMAIFFLLVGMEIKREALEGSLSSMRQAGLPVIAAIGGMIVPAAMFSFIINDAPQFMAGWAIPMATDIAFALGVLSLLSGRVPLSLKVFLLALAIIDDLGAIMVIALFYTAELHTIPLLFAVALSAMLLMLNRSRVMLLTPYLIVGALLWLAVLKSGVHATIAGVILGFAIPHIRGATHTPLRQLEHQLHPWSSYFILPFFAFANAGLSFSGLSWTDLGSGLPLAIIVGLFIGKPLGVMLVSWLAVKAKLAALPENVGWQQLFGLSVLCGIGFTMSIFIGGLAFGTASEAFASSRLGILFGSLIAAVFGYILLRNATRTCQRKEQKRVSSQL.

The next 12 membrane-spanning stretches (helical) occupy residues phenylalanine 8 to isoleucine 28, leucine 59 to isoleucine 79, leucine 96 to isoleucine 116, alanine 124 to leucine 144, valine 154 to phenylalanine 174, alanine 177 to leucine 197, valine 202 to serine 222, glycine 223 to alanine 243, tyrosine 261 to tryptophan 281, isoleucine 292 to valine 312, leucine 328 to leucine 348, and leucine 362 to alanine 382.

Belongs to the NhaA Na(+)/H(+) (TC 2.A.33) antiporter family.

It is found in the cell inner membrane. The catalysed reaction is Na(+)(in) + 2 H(+)(out) = Na(+)(out) + 2 H(+)(in). In terms of biological role, na(+)/H(+) antiporter that extrudes sodium in exchange for external protons. The protein is Na(+)/H(+) antiporter NhaA of Tolumonas auensis (strain DSM 9187 / NBRC 110442 / TA 4).